The following is a 119-amino-acid chain: Large ribosomal subunit protein bL20 (119 aa).

It belongs to the bacterial ribosomal protein bL20 family.

Binds directly to 23S ribosomal RNA and is necessary for the in vitro assembly process of the 50S ribosomal subunit. It is not involved in the protein synthesizing functions of that subunit. In Alkaliphilus metalliredigens (strain QYMF), this protein is Large ribosomal subunit protein bL20.